We begin with the raw amino-acid sequence, 405 residues long: MTIDTRALGFGSSDRAVYAADPWTSRGRLYPEDGSPTRSDFQRDRDRIVHTTAFRRLKHKTQVFIAQDGDHYRTRLTHTIEVAQIARALARALKLDEDLAEGVALVHDFGHTPFGHTGEDALHEVLLPYGGFDHNAQSLRIVTKLERRYAEFDGINLTWESLEGLVKHNGPLLTPDDVGTRGPVPQPILDYCELHDLELATYASLEAQVAAIADDIAYNTHDIDDGLRSGYLTFDMLEEIPFLAGLMAEVRARYPHLEPSRFTHEIMRRQITRMVEDVIAVAQERLSLLRPESAADIRAADRVIAAFSGQMAETDSQIKAMLFKRIYRNPDIMRIRAGAAQIVTDLFAAYMANPKEMQSHYWVDHIAGLADAPKARHVGDYLAGMTDTYAISAHRRLFDHTPDLR.

Positions 75–219 constitute an HD domain; the sequence is RLTHTIEVAQ…AAIADDIAYN (145 aa).

Belongs to the dGTPase family. Type 2 subfamily.

The sequence is that of Deoxyguanosinetriphosphate triphosphohydrolase-like protein from Rhizobium leguminosarum bv. trifolii (strain WSM2304).